The sequence spans 232 residues: MVSKISKRMQQISQGIDRSALYGLSDAVVMLKERATARFDETVEIAMNLGIDPRHANQMVRGVVTMPNGTGVNVRVAVFATSSKADEAREAGADIVGGEDLFEIVKGGQIDFDRCIATPDMMPLVGRLGRILGPRGIMPNLRVGTVTTDVATAVRESKSGAVDFRSEKAGIIHAGIGKVSFENKKIEENVLAFVSAVVKAKPSVAKGDYVKRVTLSSTMGCGIKVDLSSFSV.

The protein belongs to the universal ribosomal protein uL1 family. In terms of assembly, part of the 50S ribosomal subunit.

Functionally, binds directly to 23S rRNA. The L1 stalk is quite mobile in the ribosome, and is involved in E site tRNA release. In terms of biological role, protein L1 is also a translational repressor protein, it controls the translation of the L11 operon by binding to its mRNA. The sequence is that of Large ribosomal subunit protein uL1 from Liberibacter asiaticus (Citrus greening disease).